An 837-amino-acid polypeptide reads, in one-letter code: Outer membrane usher protein HifC (837 aa).

The first 26 residues, 1 to 26 (MKTKIFPLNKIAFACSLLLANPLAWA), serve as a signal peptide directing secretion. A disulfide bridge links cysteine 813 with cysteine 833.

This sequence belongs to the fimbrial export usher family.

It is found in the cell outer membrane. In terms of biological role, essential for piliation. The polypeptide is Outer membrane usher protein HifC (hifC) (Haemophilus influenzae).